A 3718-amino-acid polypeptide reads, in one-letter code: Laminin subunit alpha-5 (3718 aa).

Residues 1–40 form the signal peptide; sequence MAKRGGQLCAGSAPGALGPRSPAPRPLLLLLAGLALVGEA. A Laminin N-terminal domain is found at 46–304; the sequence is DGFSLHPPYF…SIKDISIGGR (259 aa). Residues Asn-100, Asn-148, and Asn-248 are each glycosylated (N-linked (GlcNAc...) asparagine). Disulfide bonds link Cys-305–Cys-314, Cys-307–Cys-327, Cys-329–Cys-338, Cys-341–Cys-361, Cys-364–Cys-373, Cys-366–Cys-398, Cys-401–Cys-410, Cys-413–Cys-431, Cys-434–Cys-445, Cys-436–Cys-452, Cys-454–Cys-463, and Cys-466–Cys-476. 3 Laminin EGF-like domains span residues 305–363, 364–433, and 434–479; these read CVCH…ECQS, CNCH…VCRP, and CDCE…CYPL. The N-linked (GlcNAc...) asparagine glycan is linked to Asn-383. N-linked (GlcNAc...) asparagine glycosylation occurs at Asn-457. Asn-485 carries N-linked (GlcNAc...) asparagine glycosylation. 29 disulfide bridges follow: Cys-500/Cys-512, Cys-502/Cys-521, Cys-523/Cys-532, Cys-535/Cys-544, Cys-547/Cys-559, Cys-549/Cys-566, Cys-568/Cys-577, Cys-580/Cys-590, Cys-593/Cys-605, Cys-595/Cys-611, Cys-613/Cys-622, Cys-625/Cys-635, Cys-638/Cys-650, Cys-640/Cys-656, Cys-658/Cys-667, Cys-670/Cys-680, Cys-683/Cys-695, Cys-685/Cys-702, Cys-704/Cys-713, Cys-716/Cys-731, Cys-752/Cys-761, Cys-764/Cys-779, Cys-782/Cys-796, Cys-784/Cys-802, Cys-804/Cys-813, Cys-816/Cys-831, Cys-834/Cys-846, Cys-836/Cys-853, and Cys-855/Cys-864. Laminin EGF-like domains are found at residues 500–546, 547–592, 593–637, 638–682, 683–728, 729–781, and 782–833; these read CDCN…SCHP, CQCS…LCQL, CGCS…DCHA, CACD…SCIP, CHCS…YCEA, GSCH…GCTR, and CSCD…GCRS. Residues 834–855 form the Laminin EGF-like 11; truncated domain; it reads CRCDVGGALGQGCEPKTGACRC. The interval 856–1442 is domain IV 1 (domain IV B); that stretch reads RPNTQGPTCS…SLFYNNGALP (587 aa). Residues Asn-905, Asn-926, and Asn-964 are each glycosylated (N-linked (GlcNAc...) asparagine). The tract at residues 1253 to 1284 is disordered; sequence LTQSQELSPGAPPEGPQPRPPTAVDPNAEPTL. Residues 1262–1275 are compositionally biased toward pro residues; the sequence is GAPPEGPQPRPPTA. N-linked (GlcNAc...) asparagine glycosylation occurs at Asn-1335. Disulfide bonds link Cys-1443–Cys-1455, Cys-1445–Cys-1462, Cys-1464–Cys-1473, Cys-1476–Cys-1486, Cys-1489–Cys-1496, Cys-1491–Cys-1503, Cys-1505–Cys-1514, Cys-1517–Cys-1530, Cys-1533–Cys-1548, Cys-1535–Cys-1555, Cys-1557–Cys-1566, Cys-1569–Cys-1579, Cys-1582–Cys-1594, Cys-1584–Cys-1601, Cys-1603–Cys-1612, and Cys-1615–Cys-1630. 4 Laminin EGF-like domains span residues 1443-1488, 1489-1532, 1533-1581, and 1582-1632; these read CGCH…NCRP, CDCG…GCEE, CNCS…SCRP, and CDCH…GCTR. N-linked (GlcNAc...) asparagine glycosylation occurs at Asn-1534. In terms of domain architecture, Laminin EGF-like 16; first part spans 1633–1642; the sequence is CFCFGATERC. The 186-residue stretch at 1646 to 1831 folds into the Laminin IV type A domain; that stretch reads NLARHEFVDM…RGPPASNVEL (186 aa). Short sequence motifs (cell attachment site) lie at residues 1723–1725 and 1839–1841; these read RGD. Positions 1832–1864 constitute a Laminin EGF-like 16; second part domain; it reads CMCPANYRGDSCQECAPGYYRDTKGLFLGRCVP. Cystine bridges form between Cys-1865-Cys-1874, Cys-1867-Cys-1881, Cys-1884-Cys-1893, Cys-1896-Cys-1912, Cys-1915-Cys-1930, Cys-1917-Cys-1939, Cys-1941-Cys-1950, Cys-1953-Cys-1968, Cys-1971-Cys-1986, Cys-1973-Cys-1993, Cys-1996-Cys-2005, Cys-2008-Cys-2022, Cys-2025-Cys-2035, Cys-2027-Cys-2042, Cys-2044-Cys-2053, Cys-2056-Cys-2069, Cys-2072-Cys-2083, Cys-2074-Cys-2090, Cys-2092-Cys-2101, Cys-2104-Cys-2116, Cys-2119-Cys-2126, Cys-2121-Cys-2133, Cys-2135-Cys-2144, and Cys-2147-Cys-2166. 6 Laminin EGF-like domains span residues 1865 to 1914, 1915 to 1970, 1971 to 2024, 2025 to 2071, 2072 to 2118, and 2119 to 2168; these read CQCH…PCVS, CPCP…SCQP, CDCS…NCTR, CDCS…GCRP, CACG…GCRR, and CQCP…HCEV. Asn-2021 is a glycosylation site (N-linked (GlcNAc...) asparagine). A domain II and I region spans residues 2169-2735; the sequence is CDHCVVLLLD…AQARSAASKV (567 aa). N-linked (GlcNAc...) asparagine glycosylation is found at Asn-2198, Asn-2211, Asn-2365, Asn-2395, Asn-2425, Asn-2503, and Asn-2570. Coiled-coil stretches lie at residues 2205 to 2257 and 2330 to 2464; these read ARLH…SQAT and TRDL…ASLD. Coiled coils occupy residues 2604-2621 and 2639-2705; these read ARKN…AMLA and AEAL…LENR. N-linked (GlcNAc...) asparagine glycosylation occurs at Asn-2709. 5 consecutive Laminin G-like domains span residues 2736-2933, 2947-3119, 3128-3296, 3337-3511, and 3518-3689; these read KVSM…DKPC, GSYL…SFGC, TMTF…SVGC, AYQF…VTPC, and DGLF…MRGC. Intrachain disulfides connect Cys-2903–Cys-2933 and Cys-3094–Cys-3119. N-linked (GlcNAc...) asparagine glycosylation is found at Asn-3111, Asn-3213, Asn-3261, and Asn-3291. Disulfide bonds link Cys-3265/Cys-3296 and Cys-3488/Cys-3511. N-linked (GlcNAc...) asparagine glycans are attached at residues Asn-3623 and Asn-3673. A disulfide bridge connects residues Cys-3661 and Cys-3689.

In terms of assembly, laminin is a complex glycoprotein, consisting of three different polypeptide chains (alpha, beta, gamma), which are bound to each other by disulfide bonds into a cross-shaped molecule comprising one long and three short arms with globules at each end. Alpha-5 is a subunit of laminin-10 (laminin-511), laminin-11 (laminin-521) and laminin-15 (laminin-523). As to expression, in adult, high levels in heart, lung, and kidney; lower in brain, muscle and testis; very low in liver, gut and skin.

The protein resides in the secreted. It localises to the extracellular space. It is found in the extracellular matrix. Its subcellular location is the basement membrane. Functionally, binding to cells via a high affinity receptor, laminin is thought to mediate the attachment, migration and organization of cells into tissues during embryonic development by interacting with other extracellular matrix components. Alpha-5 may be the major laminin alpha chain of adult epithelial and/or endothelial basal laminae. Plays a role in the regulation of skeletogenesis, through a mechanism that involves integrin-mediated signaling and PTK2B/PYK2. The polypeptide is Laminin subunit alpha-5 (Lama5) (Mus musculus (Mouse)).